The following is a 187-amino-acid chain: UPF0301 protein YqgE (187 aa).

The protein belongs to the UPF0301 (AlgH) family.

The sequence is that of UPF0301 protein YqgE from Escherichia fergusonii (strain ATCC 35469 / DSM 13698 / CCUG 18766 / IAM 14443 / JCM 21226 / LMG 7866 / NBRC 102419 / NCTC 12128 / CDC 0568-73).